The sequence spans 335 residues: ETS translocation variant 2 (335 aa).

Disordered stretches follow at residues Asp94 to His138 and Gly201 to Ala220. A compositionally biased stretch (polar residues) spans Pro205–Ala220. Residues Ile234–Gly314 constitute a DNA-binding region (ETS).

It belongs to the ETS family. As to expression, testis.

The protein localises to the nucleus. Binds to DNA sequences containing the consensus pentanucleotide 5'-CGGA[AT]-3'. The sequence is that of ETS translocation variant 2 (Etv2) from Mus musculus (Mouse).